We begin with the raw amino-acid sequence, 533 residues long: Sterol 26-hydroxylase, mitochondrial (533 aa).

A mitochondrion-targeting transit peptide spans 1–32; the sequence is MAAWSRTRLRWTLLDPRVVGRGLCPQGARAKA. The interval 34–60 is disordered; it reads IPAALQAQESTEGPGTGQDRPRLRSPA. Lys-142, Lys-232, Lys-285, Lys-296, and Lys-375 each carry N6-acetyllysine. The tract at residues 386-400 is sterol-binding; that stretch reads PLLKAVIKETLRLYP. Cys-479 contacts heme. Lys-512 and Lys-523 each carry N6-acetyllysine.

The protein belongs to the cytochrome P450 family. Interacts with HSP70; this interaction is required for initial targeting to mitochondria. Heme is required as a cofactor. In terms of processing, acetylation of Lys-125 and Lys-285 is observed in liver mitochondria from fasted mice but not from fed mice. As to expression, expressed in the gray and white matter of cerebellum (at protein level).

The protein localises to the mitochondrion inner membrane. It catalyses the reaction 5beta-cholestane-3alpha,7alpha,12alpha-triol + 6 reduced [adrenodoxin] + 3 O2 + 5 H(+) = (25R)-3alpha,7alpha,12alpha-trihydroxy-5beta-cholestan-26-oate + 6 oxidized [adrenodoxin] + 4 H2O. The catalysed reaction is cholestanol + 2 reduced [adrenodoxin] + O2 + 2 H(+) = (25R)-26-hydroxycholestanol + 2 oxidized [adrenodoxin] + H2O. It carries out the reaction (25R)-3beta-hydroxycholest-5-en-7-one-26-al + 2 reduced [adrenodoxin] + O2 + H(+) = (25R)-3beta-hydroxycholest-5-en-7-one-26-oate + 2 oxidized [adrenodoxin] + H2O. The enzyme catalyses (25R)-3beta,26-dihydroxycholest-5-en-7-one + 2 reduced [adrenodoxin] + O2 + 2 H(+) = (25R)-3beta-hydroxycholest-5-en-7-one-26-al + 2 oxidized [adrenodoxin] + 2 H2O. It catalyses the reaction 7-oxocholesterol + 2 reduced [adrenodoxin] + O2 + 2 H(+) = (25R)-3beta,26-dihydroxycholest-5-en-7-one + 2 oxidized [adrenodoxin] + H2O. The catalysed reaction is calciol + 2 reduced [adrenodoxin] + O2 + 2 H(+) = calcidiol + 2 oxidized [adrenodoxin] + H2O. It carries out the reaction (25R)-5beta-cholestane-3alpha,7alpha,12alpha,26-tetrol + 2 reduced [adrenodoxin] + O2 + 2 H(+) = (25R)-3alpha,7alpha,12alpha-trihydroxy-5beta-cholestan-26-al + 2 oxidized [adrenodoxin] + 2 H2O. The enzyme catalyses 2 reduced [adrenodoxin] + cholesterol + O2 + 2 H(+) = (25R)-cholest-5-ene-3beta,26-diol + 2 oxidized [adrenodoxin] + H2O. It catalyses the reaction (25R)-3beta,4beta-dihydroxycholest-5-en-26-al + 2 reduced [adrenodoxin] + O2 + H(+) = (25R)-3beta,4beta-dihydroxycholest-5-en-26-oate + 2 oxidized [adrenodoxin] + H2O. The catalysed reaction is (25R)-4beta,26-dihydroxycholesterol + 2 reduced [adrenodoxin] + O2 + 2 H(+) = (25R)-3beta,4beta-dihydroxycholest-5-en-26-al + 2 oxidized [adrenodoxin] + 2 H2O. It carries out the reaction 4beta-hydroxycholesterol + 2 reduced [adrenodoxin] + O2 + 2 H(+) = (25R)-4beta,26-dihydroxycholesterol + 2 oxidized [adrenodoxin] + H2O. The enzyme catalyses (25R)-3beta-hydroxy-5-cholesten-26-al + 2 reduced [adrenodoxin] + O2 + H(+) = (25R)-3beta-hydroxy-5-cholestenoate + 2 oxidized [adrenodoxin] + H2O. It catalyses the reaction (25R)-cholest-5-ene-3beta,26-diol + 2 reduced [adrenodoxin] + O2 + 2 H(+) = (25R)-3beta-hydroxy-5-cholesten-26-al + 2 oxidized [adrenodoxin] + 2 H2O. The catalysed reaction is (25R)-3alpha,7alpha,12alpha-trihydroxy-5beta-cholestan-26-al + 2 reduced [adrenodoxin] + O2 + H(+) = (25R)-3alpha,7alpha,12alpha-trihydroxy-5beta-cholestan-26-oate + 2 oxidized [adrenodoxin] + H2O. It carries out the reaction 5beta-cholestane-3alpha,7alpha,12alpha-triol + 2 reduced [adrenodoxin] + O2 + 2 H(+) = (25R)-5beta-cholestane-3alpha,7alpha,12alpha,26-tetrol + 2 oxidized [adrenodoxin] + H2O. The protein operates within hormone biosynthesis; cholecalciferol biosynthesis. Its pathway is steroid metabolism; cholesterol degradation. It participates in lipid metabolism; bile acid biosynthesis. Functionally, cytochrome P450 monooxygenase that catalyzes regio- and stereospecific hydroxylation of cholesterol and its derivatives. Hydroxylates (with R stereochemistry) the terminal methyl group of cholesterol side-chain in a three step reaction to yield at first a C26 alcohol, then a C26 aldehyde and finally a C26 acid. Regulates cholesterol homeostasis by catalyzing the conversion of excess cholesterol to bile acids via both the 'neutral' (classic) and the 'acid' (alternative) pathways. May also regulate cholesterol homeostasis via generation of active oxysterols, which act as ligands for NR1H2 and NR1H3 nuclear receptors, modulating the transcription of genes involved in lipid metabolism. Plays a role in cholestanol metabolism in the cerebellum. Similarly to cholesterol, hydroxylates cholestanol and may facilitate sterol diffusion through the blood-brain barrier to the systemic circulation for further degradation. Also hydroxylates retinal 7-ketocholesterol, a noxious oxysterol with pro-inflammatory and pro-apoptotic effects, and may play a role in its elimination from the retinal pigment epithelium. May play a redundant role in vitamin D biosynthesis. Catalyzes 25-hydroxylation of vitamin D3 that is required for its conversion to a functionally active form. This Mus musculus (Mouse) protein is Sterol 26-hydroxylase, mitochondrial.